We begin with the raw amino-acid sequence, 82 residues long: DNA-directed RNA polymerase subunit Rpo5 (82 aa).

This sequence belongs to the archaeal Rpo5/eukaryotic RPB5 RNA polymerase subunit family. As to quaternary structure, part of the RNA polymerase complex.

It is found in the cytoplasm. It carries out the reaction RNA(n) + a ribonucleoside 5'-triphosphate = RNA(n+1) + diphosphate. In terms of biological role, DNA-dependent RNA polymerase (RNAP) catalyzes the transcription of DNA into RNA using the four ribonucleoside triphosphates as substrates. This chain is DNA-directed RNA polymerase subunit Rpo5, found in Thermococcus onnurineus (strain NA1).